The chain runs to 476 residues: Cardiolipin synthase (476 aa).

2 helical membrane passes run 2–22 (HLLI…IIFI) and 31–51 (WAWI…YILF). PLD phosphodiesterase domains lie at 207–234 (INYR…GDEY) and 389–416 (EKGF…DIRS). Catalysis depends on residues His212, Lys214, Asp219, His394, Lys396, and Asp401.

The protein belongs to the phospholipase D family. Cardiolipin synthase subfamily.

The protein resides in the cell membrane. It catalyses the reaction 2 a 1,2-diacyl-sn-glycero-3-phospho-(1'-sn-glycerol) = a cardiolipin + glycerol. Catalyzes the reversible phosphatidyl group transfer from one phosphatidylglycerol molecule to another to form cardiolipin (CL) (diphosphatidylglycerol) and glycerol. This chain is Cardiolipin synthase (cls), found in Clostridium perfringens (strain SM101 / Type A).